We begin with the raw amino-acid sequence, 415 residues long: Elongation factor Tu, chloroplastic (415 aa).

Residues K13–R217 enclose the tr-type G domain. A G1 region spans residues G22–T29. Residue G22–T29 coordinates GTP. Residue T29 coordinates Mg(2+). Residues N63–Y67 are G2. Residues D84–G87 form a G3 region. GTP-binding positions include D84 to H88 and N139 to D142. A G4 region spans residues N139–D142. The G5 stretch occupies residues S177–L179.

This sequence belongs to the TRAFAC class translation factor GTPase superfamily. Classic translation factor GTPase family. EF-Tu/EF-1A subfamily.

The protein localises to the plastid. Its subcellular location is the chloroplast. The enzyme catalyses GTP + H2O = GDP + phosphate + H(+). Functionally, GTP hydrolase that promotes the GTP-dependent binding of aminoacyl-tRNA to the A-site of ribosomes during protein biosynthesis. This Coleochaete orbicularis (Charophycean green alga) protein is Elongation factor Tu, chloroplastic (tufA).